A 510-amino-acid polypeptide reads, in one-letter code: GMP synthase [glutamine-hydrolyzing] (510 aa).

Residues 5–195 (LVLVVDFGGQ…LFNVCNLKGD (191 aa)) form the Glutamine amidotransferase type-1 domain. Residue cysteine 82 is the Nucleophile of the active site. Active-site residues include histidine 169 and glutamate 171. In terms of domain architecture, GMPS ATP-PPase spans 196-385 (WSMSSFAEQQ…LGIPHKLVWR (190 aa)). 223–229 (SGGVDSS) provides a ligand contact to ATP.

In terms of assembly, homodimer.

The catalysed reaction is XMP + L-glutamine + ATP + H2O = GMP + L-glutamate + AMP + diphosphate + 2 H(+). The protein operates within purine metabolism; GMP biosynthesis; GMP from XMP (L-Gln route): step 1/1. Functionally, catalyzes the synthesis of GMP from XMP. The polypeptide is GMP synthase [glutamine-hydrolyzing] (Clostridium botulinum (strain ATCC 19397 / Type A)).